The sequence spans 483 residues: Altronate oxidoreductase (483 aa).

18–29 (IIQFGEGNFLRA) provides a ligand contact to NAD(+).

The protein belongs to the mannitol dehydrogenase family. UxaB subfamily.

It carries out the reaction D-altronate + NAD(+) = keto-D-tagaturonate + NADH + H(+). The protein operates within carbohydrate metabolism; pentose and glucuronate interconversion. In Escherichia coli O7:K1 (strain IAI39 / ExPEC), this protein is Altronate oxidoreductase.